A 426-amino-acid polypeptide reads, in one-letter code: 6-Hydroxy-7-prenyldeoxybrevianamide E synthase notC' (426 aa).

Glu94 contributes to the substrate binding site. Arg105, Lys191, and Tyr193 together coordinate dimethylallyl diphosphate. Tyr195 contributes to the substrate binding site. Dimethylallyl diphosphate contacts are provided by Lys267, Tyr269, Gln352, Tyr354, Tyr418, and Tyr422.

Belongs to the tryptophan dimethylallyltransferase family.

It carries out the reaction 6-hydroxydeoxybrevianamide E + dimethylallyl diphosphate = notoamide S + diphosphate. Its pathway is alkaloid biosynthesis. Prenyltransferase; part of the gene cluster that mediates the biosynthesis of notoamide, a fungal indole alkaloid that belongs to a family of natural products containing a characteristic bicyclo[2.2.2]diazaoctane core. The first step of notoamide biosynthesis involves coupling of L-proline and L-tryptophan by the bimodular NRPS notE', to produce cyclo-L-tryptophan-L-proline called brevianamide F. The reverse prenyltransferase notF' then acts as a deoxybrevianamide E synthase and converts brevianamide F to deoxybrevianamide E via reverse prenylation at C-2 of the indole ring leading to the bicyclo[2.2.2]diazaoctane core. Deoxybrevianamide E is further hydroxylated at C-6 of the indole ring, likely catalyzed by the cytochrome P450 monooxygenase notG', to yield 6-hydroxy-deoxybrevianamide E. 6-hydroxy-deoxybrevianamide E is a specific substrate of the prenyltransferase notC' for normal prenylation at C-7 to produce 6-hydroxy-7-prenyl-deoxybrevianamide, also called notoamide S. As the proposed pivotal branching point in notoamide biosynthesis, notoamide S can be diverted to notoamide E through an oxidative pyran ring closure putatively catalyzed by either notH' cytochrome P450 monooxygenase or the notD' FAD-linked oxidoreductase. This step would be followed by an indole 2,3-epoxidation-initiated pinacol-like rearrangement catalyzed by the notB' FAD-dependent monooxygenase leading to the formation of notoamide C and notoamide D. On the other hand notoamide S is converted to notoamide T by notH' (or notD'), a bifunctional oxidase that also functions as the intramolecular Diels-Alderase responsible for generation of (-)-notoamide T. To generate antipodal (+)-notoaminide T, notH (or notD) in Aspergillus strain MF297-2 is expected to catalyze a Diels-Alder reaction leading to the opposite stereochemistry. The remaining oxidoreductase notD' (or notH') likely catalyzes the oxidative pyran ring formation to yield (-)-stephacidin A. The FAD-dependent monooxygenase notI' is highly similar to notB' and is predicted to catalyze a similar conversion from (-)-stephacidin A to (+)-notoamide B via the 2,3-epoxidation of (-)-stephacidin A followed by a pinacol-type rearrangement. Finally, it remains unclear which enzyme could be responsible for the final hydroxylation steps leading to notoamide A and sclerotiamide. In Aspergillus versicolor, this protein is 6-Hydroxy-7-prenyldeoxybrevianamide E synthase notC'.